Here is a 372-residue protein sequence, read N- to C-terminus: Chaperone protein DnaJ (372 aa).

The J domain maps to Asp5–Gly70. The segment at Gly130–Lys208 adopts a CR-type zinc-finger fold. Positions 143, 146, 160, 163, 182, 185, 196, and 199 each coordinate Zn(2+). 4 CXXCXGXG motif repeats span residues Cys143 to Gly150, Cys160 to Gly167, Cys182 to Gly189, and Cys196 to Gly203.

This sequence belongs to the DnaJ family. Homodimer. Zn(2+) serves as cofactor.

The protein localises to the cytoplasm. Functionally, participates actively in the response to hyperosmotic and heat shock by preventing the aggregation of stress-denatured proteins and by disaggregating proteins, also in an autonomous, DnaK-independent fashion. Unfolded proteins bind initially to DnaJ; upon interaction with the DnaJ-bound protein, DnaK hydrolyzes its bound ATP, resulting in the formation of a stable complex. GrpE releases ADP from DnaK; ATP binding to DnaK triggers the release of the substrate protein, thus completing the reaction cycle. Several rounds of ATP-dependent interactions between DnaJ, DnaK and GrpE are required for fully efficient folding. Also involved, together with DnaK and GrpE, in the DNA replication of plasmids through activation of initiation proteins. This chain is Chaperone protein DnaJ, found in Pasteurella multocida (strain Pm70).